A 586-amino-acid chain; its full sequence is Ezrin (586 aa).

An FERM domain is found at P2–K296. Position 60 is an N6-acetyllysine (K60). The short motif at I115–E120 is the [IL]-x-C-x-x-[DE] motif element. Position 146 is a phosphotyrosine; by PDGFR (Y146). The interaction with SCYL3 stretch occupies residues E244–L586. Residues V302–E462 adopt a coiled-coil conformation. Positions K306–M341 are disordered. The segment covering Q308–M341 has biased composition (basic and acidic residues). Y354 is modified (phosphotyrosine; by PDGFR). S366 is subject to Phosphoserine. At Y478 the chain carries Phosphotyrosine. The disordered stretch occupies residues V485 to K564. Residues G507 to Q528 show a composition bias toward basic and acidic residues. The segment covering Q530–S539 has biased composition (polar residues). S535 carries the post-translational modification Phosphoserine. Positions Q540–K564 are enriched in basic and acidic residues. The residue at position 567 (T567) is a Phosphothreonine; by ROCK2 and PKC/PRKCI.

As to quaternary structure, monomer. Homodimer. Interacts with PALS1 and NHERF2. Found in a complex with EZR, PODXL and NHERF2. Interacts with MCC, PLEKHG6, PODXL, SCYL3/PACE1, NHERF1 and TMEM8B. Interacts (when phosphorylated) with FES/FPS. Interacts with dimeric S100P, the interaction may be activating through unmasking of F-actin binding sites. Identified in complexes that contain VIM, EZR, AHNAK, BFSP1, BFSP2, ANK2, PLEC, PRX and spectrin. Detected in a complex composed of at least EZR, AHNAK, PPL and PRX. Interacts with PDPN (via cytoplasmic domain); activates RHOA and promotes epithelial-mesenchymal transition. Interacts with SPN/CD43 cytoplasmic tail, CD44 and ICAM2. Interacts with SLC9A3; interaction targets SLC9A3 to the apical membrane. Interacts with SLC9A1; regulates interactions of SLC9A1 with cytoskeletal and promotes stress fiber formation. Interacts with CLIC5; may work together in a complex which also includes RDX and MYO6 to stabilize linkages between the plasma membrane and subjacent actin cytoskeleton at the base of stereocilia. In terms of processing, phosphorylated by tyrosine-protein kinases. Phosphorylation by ROCK2 suppresses the head-to-tail association of the N-terminal and C-terminal halves resulting in an opened conformation which is capable of actin and membrane-binding. Post-translationally, S-nitrosylation is induced by interferon-gamma and oxidatively-modified low-densitity lipoprotein (LDL(ox)) possibly implicating the iNOS-S100A8/9 transnitrosylase complex. In terms of tissue distribution, expressed in cerebral cortex, basal ganglia, hippocampus, hypophysis, and optic nerve. Weakly expressed in brain stem and diencephalon. Stronger expression was detected in gray matter of frontal lobe compared to white matter (at protein level). Component of the microvilli of intestinal epithelial cells. Preferentially expressed in astrocytes of hippocampus, frontal cortex, thalamus, parahippocampal cortex, amygdala, insula, and corpus callosum. Not detected in neurons in most tissues studied.

Its subcellular location is the apical cell membrane. The protein resides in the cell projection. It is found in the microvillus membrane. The protein localises to the ruffle membrane. It localises to the cytoplasm. Its subcellular location is the cell cortex. The protein resides in the cytoskeleton. It is found in the microvillus. A head-to-tail association, of the N-terminal and C-terminal halves results in a closed conformation (inactive form) which is incapable of actin or membrane-binding. Its function is as follows. Probably involved in connections of major cytoskeletal structures to the plasma membrane. In epithelial cells, required for the formation of microvilli and membrane ruffles on the apical pole. Along with PLEKHG6, required for normal macropinocytosis. In Homo sapiens (Human), this protein is Ezrin (EZR).